The sequence spans 678 residues: Platelet endothelial cell adhesion molecule (678 aa).

Positions 1–17 are cleaved as a signal peptide; it reads MLLALLLTMLLYASLQA. Topologically, residues 18-589 are extracellular; the sequence is QENSFTINSI…VRVFLAPWKK (572 aa). 6 Ig-like C2-type domains span residues 40–126, 135–213, 225–309, 315–391, 413–472, and 488–577; these read GQKL…PEVT, GGIV…FIRS, PKFQ…ILVN, PRPK…LVPV, GQII…NCHS, and PVDE…RSGP. Cysteines 47 and 99 form a disulfide. N-linked (GlcNAc...) asparagine glycosylation is found at Asn74 and Asn141. Disulfide bonds link Cys142–Cys195 and Cys245–Cys293. Residues Asn309, Asn345, Asn360, Asn424, and Asn540 are each glycosylated (N-linked (GlcNAc...) asparagine). Cystine bridges form between Cys336–Cys375, Cys420–Cys465, and Cys512–Cys561. The chain crosses the membrane as a helical span at residues 590-610; sequence GLIAVVVIGVVIAALIVAAKY. Residues 611–678 lie on the Cytoplasmic side of the membrane; sequence YFLRKAKAKQ…EPHQENGRLP (68 aa). The disordered stretch occupies residues 634–653; the sequence is NSNSEKVSEPSVETNSHYDS. An ITIM motif motif is present at residues 658-663; that stretch reads VEYTEV. Tyr660 carries the post-translational modification Phosphotyrosine; by FER.

As to quaternary structure, trans-homodimer (via Ig-like C2-type 1 and Ig-like C2-type 2 domains); trans-homodimerization is required for cell-cell interaction. Forms a complex with BDKRB2 and GNAQ. Interacts with BDKRB2 and GNAQ. Interacts with PTPN11. Interacts with FER. Interacts with CD177; the interaction is Ca(2+)-dependent; the interaction is direct. Post-translationally, phosphorylated on Ser and Tyr residues after cellular activation. In endothelial cells Fyn mediates mechanical-force (stretch or pull) induced tyrosine phosphorylation. Phosphorylated on tyrosine residues by FER and FES in response to FCER1 activation. In terms of processing, palmitoylation by ZDHHC21 is necessary for cell surface expression in endothelial cells and enrichment in membrane rafts.

It is found in the cell membrane. The protein resides in the membrane raft. It localises to the cell junction. Its function is as follows. Cell adhesion molecule which is required for leukocyte transendothelial migration (TEM) under most inflammatory conditions. Tyr-660 plays a critical role in TEM and is required for efficient trafficking of PECAM1 to and from the lateral border recycling compartment (LBRC) and is also essential for the LBRC membrane to be targeted around migrating leukocytes. Trans-homophilic interaction may play a role in endothelial cell-cell adhesion via cell junctions. Heterophilic interaction with CD177 plays a role in transendothelial migration of neutrophils. Homophilic ligation of PECAM1 prevents macrophage-mediated phagocytosis of neighboring viable leukocytes by transmitting a detachment signal. Promotes macrophage-mediated phagocytosis of apoptotic leukocytes by tethering them to the phagocytic cells; PECAM1-mediated detachment signal appears to be disabled in apoptotic leukocytes. Modulates bradykinin receptor BDKRB2 activation. Regulates bradykinin- and hyperosmotic shock-induced ERK1/2 activation in endothelial cells. Induces susceptibility to atherosclerosis. This chain is Platelet endothelial cell adhesion molecule (Pecam1), found in Rattus norvegicus (Rat).